The primary structure comprises 1166 residues: Poly [ADP-ribose] polymerase tankyrase-2 (1166 aa).

4 ANK repeats span residues 23-52 (PSAR…VNSR), 57-86 (RKST…NVQA), 90-119 (GGLI…DPNA), and 123-152 (WNYT…EPTI). Asn203 carries the (3S)-3-hydroxyasparagine; by HIF1AN modification. ANK repeat units follow at residues 210–239 (RKST…DVHA), 243–272 (GDLV…CVNA), 276–305 (WQFT…DPTL), 363–395 (THET…NTNE), 399–428 (EFLT…KVNA), 432–461 (LGQT…DPNI), and 463–489 (SLQG…SLGH). The residue at position 238 (His238) is a (3S)-3-hydroxyhistidine; by HIF1AN. The residue at position 271 (Asn271) is a (3S)-3-hydroxyasparagine; by HIF1AN. At Asn427 the chain carries (3S)-3-hydroxyasparagine; by HIF1AN. Residue Asn518 is modified to (3S)-3-hydroxyasparagine; by HIF1AN. 4 ANK repeats span residues 525 to 554 (RQST…DVHA), 558 to 587 (GGLV…VVNV), 591 to 620 (WKFT…DPTK), and 624 to 652 (DGNT…LLDA). The segment at 545–553 (LLQHGADVH) is HIF1AN-binding. At His553 the chain carries (3S)-3-hydroxyhistidine; by HIF1AN. Asn586 is modified ((3S)-3-hydroxyasparagine; by HIF1AN). 3 positions are modified to (3S)-3-hydroxyasparagine; by HIF1AN: Asn671, Asn706, and Asn739. ANK repeat units follow at residues 678 to 707 (RHST…DVNA), 711 to 740 (GGLI…CVNA), and 744 to 773 (WAFT…DPTL). An SAM domain is found at 873–936 (GIDFSITQFI…IKGVERLISG (64 aa)). The PARP catalytic domain occupies 959–1164 (SPDDKEFQSV…YQIVRPEGMV (206 aa)). 4 residues coordinate Zn(2+): Cys1081, His1084, Cys1089, and Cys1092.

It belongs to the ARTD/PARP family. Oligomerizes and associates with TNKS. Interacts with the cytoplasmic domain of LNPEP/Otase in SLC2A4/GLUT4-vesicles. Binds to the N-terminus of Grb14 and TRF1 with its ankyrin repeat region. Interacts with HIF1AN. Interacts with RNF146; this interaction leads to ubiquitination and proteasomal degradation. Interacts with NUMA1. In terms of processing, ubiquitinated by RNF146 when auto-poly-ADP-ribosylated, leading to its degradation. Deubiquitinated by USP25; leading to stabilization. Post-translationally, ADP-ribosylated (-auto). Poly-ADP-ribosylated protein is recognized by RNF146, followed by ubiquitination.

The protein resides in the cytoplasm. Its subcellular location is the golgi apparatus membrane. The protein localises to the nucleus. It is found in the chromosome. It localises to the telomere. It catalyses the reaction NAD(+) + (ADP-D-ribosyl)n-acceptor = nicotinamide + (ADP-D-ribosyl)n+1-acceptor + H(+).. The catalysed reaction is L-aspartyl-[protein] + NAD(+) = 4-O-(ADP-D-ribosyl)-L-aspartyl-[protein] + nicotinamide. The enzyme catalyses L-glutamyl-[protein] + NAD(+) = 5-O-(ADP-D-ribosyl)-L-glutamyl-[protein] + nicotinamide. In terms of biological role, poly-ADP-ribosyltransferase involved in various processes such as Wnt signaling pathway, telomere length and vesicle trafficking. Acts as an activator of the Wnt signaling pathway by mediating poly-ADP-ribosylation of AXIN1 and AXIN2, 2 key components of the beta-catenin destruction complex: poly-ADP-ribosylated target proteins are recognized by RNF146, which mediates their ubiquitination and subsequent degradation. Also mediates poly-ADP-ribosylation of BLZF1 and CASC3, followed by recruitment of RNF146 and subsequent ubiquitination. Mediates poly-ADP-ribosylation of TERF1, thereby contributing to the regulation of telomere length. Stimulates 26S proteasome activity. The protein is Poly [ADP-ribose] polymerase tankyrase-2 of Mus musculus (Mouse).